Here is a 469-residue protein sequence, read N- to C-terminus: Sulfate adenylyltransferase subunit 1 (469 aa).

The region spanning 22–238 (KQLLRFITCG…LETIKIDEDR (217 aa)) is the tr-type G domain. The tract at residues 31–38 (GSVDDGKS) is G1. Residue 31 to 38 (GSVDDGKS) coordinates GTP. The G2 stretch occupies residues 89 to 93 (GITID). A G3 region spans residues 110-113 (DTPG). Residues 110-114 (DTPGH) and 165-168 (NKMD) each bind GTP. The G4 stretch occupies residues 165-168 (NKMD). Residues 203–205 (SAL) form a G5 region.

Belongs to the TRAFAC class translation factor GTPase superfamily. Classic translation factor GTPase family. CysN/NodQ subfamily. Heterodimer composed of CysD, the smaller subunit, and CysN.

It catalyses the reaction sulfate + ATP + H(+) = adenosine 5'-phosphosulfate + diphosphate. Its pathway is sulfur metabolism; hydrogen sulfide biosynthesis; sulfite from sulfate: step 1/3. Its function is as follows. With CysD forms the ATP sulfurylase (ATPS) that catalyzes the adenylation of sulfate producing adenosine 5'-phosphosulfate (APS) and diphosphate, the first enzymatic step in sulfur assimilation pathway. APS synthesis involves the formation of a high-energy phosphoric-sulfuric acid anhydride bond driven by GTP hydrolysis by CysN coupled to ATP hydrolysis by CysD. In Aliarcobacter butzleri (strain RM4018) (Arcobacter butzleri), this protein is Sulfate adenylyltransferase subunit 1.